Consider the following 154-residue polypeptide: Ribonuclease H (154 aa).

The RNase H type-1 domain occupies 3-144 (ELPVVTIYTD…ADQLARDGIV (142 aa)). Mg(2+)-binding residues include Asp-12, Glu-50, Asp-72, and Asp-136.

It belongs to the RNase H family. As to quaternary structure, monomer. Mg(2+) serves as cofactor.

The protein localises to the cytoplasm. It carries out the reaction Endonucleolytic cleavage to 5'-phosphomonoester.. Functionally, endonuclease that specifically degrades the RNA of RNA-DNA hybrids. The chain is Ribonuclease H from Bradyrhizobium diazoefficiens (strain JCM 10833 / BCRC 13528 / IAM 13628 / NBRC 14792 / USDA 110).